A 468-amino-acid chain; its full sequence is MARALEQADGRWAWVVLLSSLVTQALTLGFPTCIGVFFTDLQRDFQASNSETSWFPSILGAMVHGGGPLCSILVKHFGCRVTMMLGGVLASLGMVVSTFSGSLTHLFLTAGVITGLGMCFSFQSSITVVGLYFVRRRPLANALASMGLSMGVTLWPLLARYLLETLGWRGAFLIFGGILLHCCVCGALLRPVATNEVPEPKEDPLLPPKIPTRSCLATCVSTIRYHLAFDILRHNMGFCIYVTGVTWMNLGFALPHIFLVPYAMHHGVDDYWAAMLMSIVGFCNIFLRPMAGLLLAGRKSLAAYRKYLFAVAILINGLTNLICTVSADFRVLLGYCLVYSLSMCGVGILVFQVLMDIVPMDRFPSALGLFTILCGVTSLISPPLAGLLLDKTNNFSYVFYMSSGFLVSGSLILGVGFYAAEKKKLKQDGQAKMENATSEMTPMHDLTSEDKDSAKKQPYPESIYMTNV.

The Cytoplasmic segment spans residues 1-13 (MARALEQADGRWA). A helical membrane pass occupies residues 14–34 (WVVLLSSLVTQALTLGFPTCI). Residues 35-53 (GVFFTDLQRDFQASNSETS) lie on the Extracellular side of the membrane. A helical membrane pass occupies residues 54 to 74 (WFPSILGAMVHGGGPLCSILV). At 75 to 80 (KHFGCR) the chain is on the cytoplasmic side. The chain crosses the membrane as a helical span at residues 81–101 (VTMMLGGVLASLGMVVSTFSG). A topological domain (extracellular) is located at residue Ser102. The chain crosses the membrane as a helical span at residues 103–122 (LTHLFLTAGVITGLGMCFSF). Residues 123–138 (QSSITVVGLYFVRRRP) are Cytoplasmic-facing. A helical membrane pass occupies residues 139–159 (LANALASMGLSMGVTLWPLLA). Residues 160 to 171 (RYLLETLGWRGA) lie on the Extracellular side of the membrane. The helical transmembrane segment at 172-192 (FLIFGGILLHCCVCGALLRPV) threads the bilayer. Topologically, residues 193 to 239 (ATNEVPEPKEDPLLPPKIPTRSCLATCVSTIRYHLAFDILRHNMGFC) are cytoplasmic. A helical transmembrane segment spans residues 240–260 (IYVTGVTWMNLGFALPHIFLV). Over 261–274 (PYAMHHGVDDYWAA) the chain is Extracellular. The helical transmembrane segment at 275–295 (MLMSIVGFCNIFLRPMAGLLL) threads the bilayer. At 296 to 306 (AGRKSLAAYRK) the chain is on the cytoplasmic side. The helical transmembrane segment at 307–327 (YLFAVAILINGLTNLICTVSA) threads the bilayer. Residues 328–330 (DFR) lie on the Extracellular side of the membrane. The helical transmembrane segment at 331–351 (VLLGYCLVYSLSMCGVGILVF) threads the bilayer. Residues 352-368 (QVLMDIVPMDRFPSALG) are Cytoplasmic-facing. A helical transmembrane segment spans residues 369-389 (LFTILCGVTSLISPPLAGLLL). At 390–396 (DKTNNFS) the chain is on the extracellular side. The helical transmembrane segment at 397–417 (YVFYMSSGFLVSGSLILGVGF) threads the bilayer. The Cytoplasmic portion of the chain corresponds to 418–468 (YAAEKKKLKQDGQAKMENATSEMTPMHDLTSEDKDSAKKQPYPESIYMTNV). Positions 429–468 (GQAKMENATSEMTPMHDLTSEDKDSAKKQPYPESIYMTNV) are disordered. Residues 446 to 455 (LTSEDKDSAK) are compositionally biased toward basic and acidic residues.

The protein belongs to the major facilitator superfamily. Monocarboxylate porter (TC 2.A.1.13) family.

It localises to the cell membrane. Its function is as follows. Proton-linked monocarboxylate transporter. Catalyzes the rapid transport across the plasma membrane of many monocarboxylates such as lactate, pyruvate, branched-chain oxo acids derived from leucine, valine and isoleucine, and the ketone bodies acetoacetate, beta-hydroxybutyrate and acetate. This chain is Monocarboxylate transporter 6 (Slc16a5), found in Mus musculus (Mouse).